Reading from the N-terminus, the 51-residue chain is Sperm protamine P1 (51 aa).

Belongs to the protamine P1 family. Testis.

It localises to the nucleus. It is found in the chromosome. In terms of biological role, protamines substitute for histones in the chromatin of sperm during the haploid phase of spermatogenesis. They compact sperm DNA into a highly condensed, stable and inactive complex. The sequence is that of Sperm protamine P1 (PRM1) from Colobus guereza (Mantled guereza).